The sequence spans 126 residues: Large ribosomal subunit protein bL12 (126 aa).

Belongs to the bacterial ribosomal protein bL12 family. Homodimer. Part of the ribosomal stalk of the 50S ribosomal subunit. Forms a multimeric L10(L12)X complex, where L10 forms an elongated spine to which 2 to 4 L12 dimers bind in a sequential fashion. Binds GTP-bound translation factors.

Its function is as follows. Forms part of the ribosomal stalk which helps the ribosome interact with GTP-bound translation factors. Is thus essential for accurate translation. This Bifidobacterium longum (strain DJO10A) protein is Large ribosomal subunit protein bL12.